The primary structure comprises 138 residues: Acidic phospholipase A2 1 (138 aa).

A signal peptide spans 1 to 16; sequence MRTLWIVAVWLMGVEG. Cystine bridges form between Cys-42–Cys-131, Cys-44–Cys-60, Cys-59–Cys-111, Cys-65–Cys-138, Cys-66–Cys-104, Cys-73–Cys-97, and Cys-91–Cys-102. Residues Tyr-43, Gly-45, and Gly-47 each contribute to the Ca(2+) site. His-63 is a catalytic residue. Residue Asp-64 participates in Ca(2+) binding. Residue Asp-105 is part of the active site.

Monomer. Ca(2+) is required as a cofactor. Expressed by the venom gland.

The protein localises to the secreted. The catalysed reaction is a 1,2-diacyl-sn-glycero-3-phosphocholine + H2O = a 1-acyl-sn-glycero-3-phosphocholine + a fatty acid + H(+). In terms of biological role, snake venom phospholipase that inhibits ADP- and collagen-induced human platelet aggregation. This inhibition is completely inhibited by abolition of catalytic activity in case of collagen as inducer and partially inhibited in case of ADP as inducer. PLA2 catalyzes the calcium-dependent hydrolysis of the 2-acyl groups in 3-sn-phosphoglycerides. This Macrovipera lebetinus (Levantine viper) protein is Acidic phospholipase A2 1.